Here is a 207-residue protein sequence, read N- to C-terminus: N-(5'-phosphoribosyl)anthranilate isomerase (207 aa).

This sequence belongs to the TrpF family.

The catalysed reaction is N-(5-phospho-beta-D-ribosyl)anthranilate = 1-(2-carboxyphenylamino)-1-deoxy-D-ribulose 5-phosphate. It functions in the pathway amino-acid biosynthesis; L-tryptophan biosynthesis; L-tryptophan from chorismate: step 3/5. The polypeptide is N-(5'-phosphoribosyl)anthranilate isomerase (Legionella pneumophila (strain Paris)).